The chain runs to 98 residues: Beta-elicitin MGM-beta (98 aa).

3 cysteine pairs are disulfide-bonded: cysteine 3–cysteine 71, cysteine 27–cysteine 56, and cysteine 51–cysteine 95.

Belongs to the elicitin family.

Its subcellular location is the secreted. Induces local and distal defense responses (incompatible hypersensitive reaction) in plants from the solanaceae and cruciferae families. Elicits leaf necrosis and causes the accumulation of pathogenesis-related proteins. Might interact with the lipidic molecules of the plasma membrane. The sequence is that of Beta-elicitin MGM-beta from Phytophthora megasperma (Potato pink rot fungus).